The chain runs to 1653 residues: MKKLRVAACMLMLALAGCDNNDNAPTAVKKDAPSEVTKAASSENASSAKLSVPERQKLAQQSAGKVLTLLDLSEVQLDGAATLVLTFSIPLDPDQDFSRVIHVVDKKSGKVDGAWELSDNLKELRLRHLEPKRDLIVTIGKEVKALNNATFSKDYEKTITTRDIQPSVGFASRGSLLPGKVVEGLPVMALNVNNVDVNFFRVKPESLPAFISQWEYRNSLANWQSDKLLQMADLVYTGRFDLNPARNTREKLLLPLGDIKPLQQAGVYLAVMNQAGRYDYSNPATLFTLSDIGVSAHRYHNRLDIFTQSLENGAAQQGIEVSLLNEKGQTLTQATSDAQGHVQLENDKNAALLLARKDGQTTLLDLKLPALDLAEFNIAGAPGYSKQFFMFGPRDLYRPGETVILNGLLRDADGKALPNQPIKLDVIKPDGQVLRSVVSQPENGLYHFTWPLDSNAATGMWHIRANTGDNQYRMWDFHVEDFMPERMALNLTGEKTPLTPKDEVKFSVVGYYLYGAPANGNTLQGQLFLRPLREAVSALPGFEFGDIAAENLSRTLDEVQLTLDDKGRGEVSTESQWKETHSPLQVIFQGSLLESGGRPVTRRAEQAIWPADALPGIRPQFASKSVYDYRTDSTVKQPIVDEGSNAAFDIVYSDAQGVKKAVSGLQVRLIRERRDYYWNWSEDEGWQSQFDQKDLIENEQTLDLKADETGKVSFPVEWGAYRLEVKAPNEAVSSVRFWAGYSWQDNSDGSGAVRPDRVTLKLDKASYRPGDTIKLHIAAPTAGKGYAMVESSEGPLWWQEIDVRAQGLDLTIPVDKTWNRHDLYLSTLVVRPGDKSRSATPKRAVGVLHLPLGDENRRLDLALETPAKMRPNQPLTVKIKASTKNGEKPKQVNVLVSAVDSGVLNITDYVTPDPWQAFFGQKRYGADIYDIYGQVIEGQGRLAALRFGGDGDELKRGGKPPVNHVNIVVQQALPVTLNEQGEGSVTLPIGDFNGELRVMAQAWTADDFGSNESKVIVAAPVIAELNMPRFMASGDTSRLTLDITNLTDKPQKLNVALTASGLLELVSDSPAAVELAPGVRTTLFIPVRALPGYGDGEIQATISGLALPGETVADQHKQWKIGVRPAFPAQTVNYGTALQPGETWAIPADGLQNFSPVTLEGQLLLSGKPPLNIARYIKELKAYPYGCLEQTASGLFPSLYTNAAQLQALGIKGDSDEKRRASVDIGISRLLQMQRDNGGFALWDKNGDEEYWLTAYVMDFLVRAGEQGYSVPTDAINRGNERLLRYLQDPGMMSIPYADNLKASKFAVQSYAALVLARQQKAPLGALREIWEHRADAASGLPLLQLGVALKTMGDATRGEEAIALALKTPRNSDERIWLGDYGSSLRDNALMLSLLEENKLLPDEQYTLLNTLSQQAFGERWLSTQESNALFLAARTIQDLPGKWQAQTSFSAEQLTGEKAQNSNLNSDQLVTLQVSNSGDQPLWLRMDASGYPQSAPLPANNVLQIERHILGTDGKSKSLDSLRSGDLVLVWLQVKASNSVPDALVVDLLPAGLELENQNLANGSASLEQSGGEVQNLLNQMQQASIKHIEFRDDRFVAAVAVDEYQPVTLVYLARAVTPGTYQVPQPMVESMYVPQWRATGAAEDLLIVRP.

A signal peptide spans Met1–Gly17. The N-palmitoyl cysteine moiety is linked to residue Cys18. Cys18 carries S-diacylglycerol cysteine lipidation. The segment at residues Cys1187–Gln1190 is a cross-link (isoglutamyl cysteine thioester (Cys-Gln)). Positions Asn1559–Lys1589 form a coiled coil.

It belongs to the protease inhibitor I39 (alpha-2-macroglobulin) family. Bacterial alpha-2-macroglobulin subfamily. May form homooligomers.

Its subcellular location is the cell inner membrane. Protects the bacterial cell from host peptidases. Acts by a 'trapping' mechanism. Cleavage of the bait-region domain by host peptidases leads to a global conformational change, which results in entrapment of the host peptidase and activation of the thioester bond that covalently binds the attacking host peptidase. Trapped peptidases are still active except against very large substrates. May protect the entire periplam, including the lipoproteins anchored to the periplasmic side of the outer membrane, against intruding endopeptidases. The chain is Alpha-2-macroglobulin (yfhM) from Escherichia coli (strain K12).